Here is a 214-residue protein sequence, read N- to C-terminus: Phosphatidylserine decarboxylase proenzyme (214 aa).

The Schiff-base intermediate with substrate; via pyruvic acid role is filled by serine 183. Serine 183 is subject to Pyruvic acid (Ser); by autocatalysis.

This sequence belongs to the phosphatidylserine decarboxylase family. PSD-A subfamily. In terms of assembly, heterodimer of a large membrane-associated beta subunit and a small pyruvoyl-containing alpha subunit. It depends on pyruvate as a cofactor. Is synthesized initially as an inactive proenzyme. Formation of the active enzyme involves a self-maturation process in which the active site pyruvoyl group is generated from an internal serine residue via an autocatalytic post-translational modification. Two non-identical subunits are generated from the proenzyme in this reaction, and the pyruvate is formed at the N-terminus of the alpha chain, which is derived from the carboxyl end of the proenzyme. The post-translation cleavage follows an unusual pathway, termed non-hydrolytic serinolysis, in which the side chain hydroxyl group of the serine supplies its oxygen atom to form the C-terminus of the beta chain, while the remainder of the serine residue undergoes an oxidative deamination to produce ammonia and the pyruvoyl prosthetic group on the alpha chain.

It is found in the cell membrane. It catalyses the reaction a 1,2-diacyl-sn-glycero-3-phospho-L-serine + H(+) = a 1,2-diacyl-sn-glycero-3-phosphoethanolamine + CO2. Its pathway is phospholipid metabolism; phosphatidylethanolamine biosynthesis; phosphatidylethanolamine from CDP-diacylglycerol: step 2/2. In terms of biological role, catalyzes the formation of phosphatidylethanolamine (PtdEtn) from phosphatidylserine (PtdSer). The sequence is that of Phosphatidylserine decarboxylase proenzyme from Chlorobaculum parvum (strain DSM 263 / NCIMB 8327) (Chlorobium vibrioforme subsp. thiosulfatophilum).